Consider the following 481-residue polypeptide: RAC-beta serine/threonine-protein kinase (481 aa).

Met1 is modified (N-acetylmethionine). Residues Ser5–Asn108 form the PH domain. Ser34 is modified (phosphoserine). Cysteines 60 and 77 form a disulfide. Ser126 bears the Phosphoserine mark. Residues Ser128 and Ser131 are each glycosylated (O-linked (GlcNAc) serine). The Protein kinase domain maps to Phe152–Phe409. Residues Leu158–Val166 and Lys181 each bind ATP. The Proton acceptor role is filled by Asp275. Residues Asn280 and Asp293 each coordinate Mn(2+). O-linked (GlcNAc) threonine glycosylation is present at Thr306. Thr309 bears the Phosphothreonine; by PDPK1 mark. The O-linked (GlcNAc) threonine glycan is linked to Thr313. The 72-residue stretch at Leu410–Glu481 folds into the AGC-kinase C-terminal domain. Ser447 carries the post-translational modification Phosphoserine. Thr451 is subject to Phosphothreonine. 3 positions are modified to phosphoserine: Ser461, Ser474, and Ser478. O-linked (GlcNAc) serine; alternate glycosylation is present at Ser474.

The protein belongs to the protein kinase superfamily. AGC Ser/Thr protein kinase family. RAC subfamily. As to quaternary structure, interacts with BTBD10. Interacts with KCTD20. Interacts (via PH domain) with MTCP1, TCL1A and TCL1B; this interaction may facilitate AKT2 oligomerization and phosphorylation, hence increasing kinase activity. Interacts with PHB2; this interaction may be important for myogenic differentiation. Interacts (when phosphorylated) with CLIP3; this interaction promotes cell membrane localization. Interacts with WDFY2 (via WD repeats 1-3). Post-translationally, phosphorylation on Thr-309 and Ser-474 is required for full activity. Phosphorylation of the activation loop at Thr-309 by PDPK1/PDK1 is a prerequisite for full activation. Phosphorylated and activated by PDPK1/PDK1 in the presence of phosphatidylinositol 3,4,5-trisphosphate. Phosphorylation by mTORC2 in response to growth factors plays a key role in AKT1 activation: mTORC2 phosphorylates different sites depending on the context, such as Ser-474 or Ser-478, thereby facilitating subsequent phosphorylation of the activation loop by PDPK1/PDK1. In terms of processing, ubiquitinated; undergoes both 'Lys-48'- and 'Lys-63'-linked polyubiquitination. TRAF6-induced 'Lys-63'-linked AKT2 ubiquitination. When fully phosphorylated and translocated into the nucleus, undergoes 'Lys-48'-polyubiquitination catalyzed by TTC3, leading to its degradation by the proteasome. O-GlcNAcylation at Thr-306 and Thr-313 inhibits activating phosphorylation at Thr-309 via disrupting the interaction between AKT and PDPK1/PDK1. Expressed in adipocytes and hepatocytes (at protein level). Expressed at low levels in skeletal muscle (at protein level).

The protein localises to the cytoplasm. It is found in the nucleus. Its subcellular location is the cell membrane. The protein resides in the early endosome. It catalyses the reaction L-seryl-[protein] + ATP = O-phospho-L-seryl-[protein] + ADP + H(+). The enzyme catalyses L-threonyl-[protein] + ATP = O-phospho-L-threonyl-[protein] + ADP + H(+). Phosphorylation at Thr-309 (in the kinase domain) and Ser-474 (in the C-terminal regulatory region) is required for full activation. In adipocytes and hepatocytes, the activation is induced by insulin. AKT2 phosphorylation of PKP1 is induced by insulin. In terms of biological role, serine/threonine kinase closely related to AKT1 and AKT3. All 3 enzymes, AKT1, AKT2 and AKT3, are collectively known as AKT kinase. AKT regulates many processes including metabolism, proliferation, cell survival, growth and angiogenesis, through the phosphorylation of a range of downstream substrates. Over 100 substrates have been reported so far, although for most of them, the precise AKT kinase catalyzing the reaction was not specified. AKT regulates glucose uptake by mediating insulin-induced translocation of the SLC2A4/GLUT4 glucose transporter to the cell surface. Phosphorylation of PTPN1 at 'Ser-50' negatively modulates its phosphatase activity preventing dephosphorylation of the insulin receptor and the attenuation of insulin signaling. Phosphorylation of TBC1D4 triggers the binding of this effector to inhibitory 14-3-3 proteins, which is required for insulin-stimulated glucose transport. AKT also regulates the storage of glucose in the form of glycogen by phosphorylating GSK3A at 'Ser-21' and GSK3B at 'Ser-9', resulting in inhibition of its kinase activity. Phosphorylation of GSK3 isoforms by AKT is also thought to be one mechanism by which cell proliferation is driven. AKT also regulates cell survival via the phosphorylation of MAP3K5 (apoptosis signal-related kinase). Phosphorylation of 'Ser-83' decreases MAP3K5 kinase activity stimulated by oxidative stress and thereby prevents apoptosis. AKT mediates insulin-stimulated protein synthesis by phosphorylating TSC2 at 'Ser-939' and 'Thr-1462', thereby activating mTORC1 signaling and leading to both phosphorylation of 4E-BP1 and in activation of RPS6KB1. AKT is involved in the phosphorylation of members of the FOXO factors (Forkhead family of transcription factors), leading to binding of 14-3-3 proteins and cytoplasmic localization. In particular, FOXO1 is phosphorylated at 'Thr-24', 'Ser-256' and 'Ser-319'. FOXO3 and FOXO4 are phosphorylated on equivalent sites. AKT has an important role in the regulation of NF-kappa-B-dependent gene transcription and positively regulates the activity of CREB1 (cyclic AMP (cAMP)-response element binding protein). The phosphorylation of CREB1 induces the binding of accessory proteins that are necessary for the transcription of pro-survival genes such as BCL2 and MCL1. AKT phosphorylates 'Ser-454' on ATP citrate lyase (ACLY), thereby potentially regulating ACLY activity and fatty acid synthesis. Activates the 3B isoform of cyclic nucleotide phosphodiesterase (PDE3B) via phosphorylation of 'Ser-273', resulting in reduced cyclic AMP levels and inhibition of lipolysis. Phosphorylates PIKFYVE on 'Ser-318', which results in increased PI(3)P-5 activity. The Rho GTPase-activating protein DLC1 is another substrate and its phosphorylation is implicated in the regulation cell proliferation and cell growth. AKT plays a role as key modulator of the AKT-mTOR signaling pathway controlling the tempo of the process of newborn neurons integration during adult neurogenesis, including correct neuron positioning, dendritic development and synapse formation. Signals downstream of phosphatidylinositol 3-kinase (PI(3)K) to mediate the effects of various growth factors such as platelet-derived growth factor (PDGF), epidermal growth factor (EGF), insulin and insulin-like growth factor 1 (IGF1). AKT mediates the antiapoptotic effects of IGF1. Essential for the SPATA13-mediated regulation of cell migration and adhesion assembly and disassembly. May be involved in the regulation of the placental development. In response to lysophosphatidic acid stimulation, inhibits the ciliogenesis cascade. In this context, phosphorylates WDR44, hence stabilizing its interaction with Rab11 and preventing the formation of the ciliogenic Rab11-FIP3-RAB3IP complex. Also phosphorylates RAB3IP/Rabin8, thus may affect RAB3IP guanine nucleotide exchange factor (GEF) activity toward Rab8, which is important for cilia growth. Phosphorylates PKP1, facilitating its interaction with YWHAG and translocation to the nucleus, ultimately resulting in a reduction in keratinocyte intercellular adhesion. Phosphorylation of PKP1 increases PKP1 protein stability, translocation to the cytoplasm away from desmosome plaques and PKP1-driven cap-dependent translation. Several AKT2-specific substrates have been identified, including ANKRD2, C2CD5, CLK2 and PITX2. May play a role in myoblast differentiation. In this context, may act through PITX2 phosphorylation. Unphosphorylated PITX2 associates with an ELAVL1/HuR-containing complex, which stabilizes cyclin mRNA and ensuring cell proliferation. Phosphorylation by AKT2 impairs this association, leading to CCND1 mRNA destabilization and progression towards differentiation. Also involved in the negative regulation of myogenesis in response to stress conditions. In this context, acts by phosphorylating ANKRD2. May also be a key regulator of glucose uptake. Regulates insulin-stimulated glucose transport by the increase of glucose transporter GLUT4 translocation from intracellular stores to the plasma membrane. In this context, acts by phosphorylating C2CD5/CDP138 on 'Ser-197' in insulin-stimulated adipocytes. Through the phosphorylation of CLK2 on 'Thr-343', involved in insulin-regulated suppression of hepatic gluconeogenesis. The polypeptide is RAC-beta serine/threonine-protein kinase (Rattus norvegicus (Rat)).